The following is a 642-amino-acid chain: Replication protein E1 (642 aa).

The Nuclear localization signal motif lies at 83–85 (KRK). 3 positions are modified to phosphoserine; by host: Ser-89, Ser-93, and Ser-107. Residues 106 to 115 (LSPRLGGLQL) carry the Nuclear export signal motif. The tract at residues 179–345 (GTNTPTTRVV…QTIVEHCFAD (167 aa)) is DNA-binding region. In terms of domain architecture, SF3 helicase spans 444–594 (IDFLTFMSAF…FPLDKNGNPV (151 aa)). 470 to 477 (GPPNTGKS) contacts ATP. A Glycyl lysine isopeptide (Lys-Gly) (interchain with G-Cter in SUMO) cross-link involves residue Lys-551.

This sequence belongs to the papillomaviridae E1 protein family. In terms of assembly, can form hexamers. Interacts with E2 protein; this interaction increases E1 DNA binding specificity. Interacts with host DNA polymerase subunit POLA2. Interacts with host single stranded DNA-binding protein RPA1. Interacts with host TOP1; this interaction stimulates the enzymatic activity of TOP1. In terms of processing, phosphorylated. Post-translationally, sumoylated.

The protein localises to the host nucleus. The catalysed reaction is Couples ATP hydrolysis with the unwinding of duplex DNA by translocating in the 3'-5' direction.. It catalyses the reaction ATP + H2O = ADP + phosphate + H(+). ATP-dependent DNA 3'-5' helicase required for initiation of viral DNA replication. It forms a complex with the viral E2 protein. The E1-E2 complex binds to the replication origin which contains binding sites for both proteins. During the initial step, a dimer of E1 interacts with a dimer of protein E2 leading to a complex that binds the viral origin of replication with high specificity. Then, a second dimer of E1 displaces the E2 dimer in an ATP-dependent manner to form the E1 tetramer. Following this, two E1 monomers are added to each half of the site, which results in the formation of two E1 trimers on the viral ori. Subsequently, two hexamers will be created. The double hexamer acts as a bi-directional helicase machinery and unwinds the viral DNA and then recruits the host DNA polymerase to start replication. This chain is Replication protein E1, found in Human papillomavirus type 32.